Consider the following 80-residue polypeptide: MEKLTILLLVAAILMSTQALNQEQRQQAKINLLSKKKPSAERWRRGCTWWFGRCAEDGECCSNSCDQTYCELYAFPSRAI.

An N-terminal signal peptide occupies residues 1–19 (MEKLTILLLVAAILMSTQA). A propeptide spanning residues 20–45 (LNQEQRQQAKINLLSKKKPSAERWRR) is cleaved from the precursor. 3 disulfide bridges follow: Cys-47-Cys-61, Cys-54-Cys-65, and Cys-60-Cys-70. Glu-56 and Glu-59 each carry 4-carboxyglutamate. Residue Glu-71 is modified to 4-carboxyglutamate. At Pro-76 the chain carries 4-hydroxyproline. Residues 78–80 (RAI) constitute a propeptide that is removed on maturation.

It belongs to the conotoxin O2 family. In terms of tissue distribution, expressed by the venom duct.

It localises to the secreted. Functionally, gamma-conotoxins may act on voltage-gated non-specific cation pacemaker channels (HCN). The chain is Gamma-conotoxin-like Am6.6 from Conus amadis (Amadis cone).